A 91-amino-acid polypeptide reads, in one-letter code: Cytochrome b-c1 complex subunit 10, mitochondrial (91 aa).

The Mitochondrial matrix segment spans residues methionine 1–lysine 34. The chain crosses the membrane as a helical span at residues glutamine 35–alanine 58. Over serine 59 to phenylalanine 91 the chain is Mitochondrial intermembrane.

The protein belongs to the UQCR11/QCR10 family. In terms of assembly, component of the ubiquinol-cytochrome c oxidoreductase (cytochrome b-c1 complex, complex III, CIII), a multisubunit enzyme composed of 10 subunits. The complex is composed of 3 respiratory subunits cytochrome b (cob), cytochrome c1 (cyt-1) and Rieske protein (fes-1), 2 core protein subunits pep and ucr-1, and 5 low-molecular weight protein subunits qcr6, qcr7, qcr8, qcr9 and probably NCU16844/qcr10. The complex exists as an obligatory dimer and forms supercomplexes (SCs) in the inner mitochondrial membrane with NADH-ubiquinone oxidoreductase (complex I, CI) and cytochrome c oxidase (complex IV, CIV), resulting in different assemblies (supercomplexes SCI(1)III(2), SCIII(2)IV(1) and SCIII(2)IV(2) as well as higher order I(x)III(y)IV(z) megacomplexes).

It localises to the mitochondrion inner membrane. In terms of biological role, component of the ubiquinol-cytochrome c oxidoreductase, a multisubunit transmembrane complex that is part of the mitochondrial electron transport chain which drives oxidative phosphorylation. The respiratory chain contains 3 multisubunit complexes succinate dehydrogenase (complex II, CII), ubiquinol-cytochrome c oxidoreductase (cytochrome b-c1 complex, complex III, CIII) and cytochrome c oxidase (complex IV, CIV), that cooperate to transfer electrons derived from NADH and succinate to molecular oxygen, creating an electrochemical gradient over the inner membrane that drives transmembrane transport and the ATP synthase. The cytochrome b-c1 complex catalyzes electron transfer from ubiquinol to cytochrome c, linking this redox reaction to translocation of protons across the mitochondrial inner membrane, with protons being carried across the membrane as hydrogens on the quinol. In the process called Q cycle, 2 protons are consumed from the matrix, 4 protons are released into the intermembrane space and 2 electrons are passed to cytochrome c. The protein is Cytochrome b-c1 complex subunit 10, mitochondrial of Neurospora crassa (strain ATCC 24698 / 74-OR23-1A / CBS 708.71 / DSM 1257 / FGSC 987).